Reading from the N-terminus, the 199-residue chain is VAMP-like protein YKT62 (199 aa).

One can recognise a Longin domain in the interval 7-131; that stretch reads LVLKCDPETR…PYLKEASDKF (125 aa). A v-SNARE coiled-coil homology domain is found at 139–199; it reads KLLKIQRELD…KKTNSCCTLL (61 aa). A lipid anchor (S-palmitoyl cysteine) is attached at Cys-195. Cys-196 is subject to Cysteine methyl ester. Cys-196 is lipidated: S-geranylgeranyl cysteine. Positions 197 to 199 are cleaved as a propeptide — removed in mature form; sequence TLL.

Belongs to the synaptobrevin family. Interacts with SYP41. Core constituent of the SNARE complex required for membrane fusion at the trans-Golgi network.

Its subcellular location is the cell membrane. Its function is as follows. Involved in the secretory pathway. Essential for membrane fusion mediated by either SYP41 or SYP61; triggers the fusion of phospholipid vesicles containing SYP41 or SYP61 and VTI12. This chain is VAMP-like protein YKT62, found in Arabidopsis thaliana (Mouse-ear cress).